The following is a 379-amino-acid chain: Multicilin (379 aa).

2 disordered regions span residues Ser-26–Ser-46 and Leu-87–Leu-106. Positions Glu-175–Leu-223 form a coiled coil. The span at Leu-289–Ser-309 shows a compositional bias: basic and acidic residues. Positions Leu-289–Arg-311 are disordered.

It belongs to the geminin family. In terms of assembly, heterodimer (via coiled-coil domain) with GMNN (via coiled-coil domain); targets GMNN to the nucleus. Can form homodimers (in vitro, via coiled-coil domain), but these are much less stable than the heterodimer formed with GMNN.

The protein localises to the nucleus. Its function is as follows. Transcription regulator specifically required for multiciliate cell differentiation. Acts in a multiprotein complex containing E2F4 and E2F5 that binds and activates genes required for centriole biogenesis. Required for the deuterosome-mediated acentriolar pathway. Plays a role in mitotic cell cycle progression by promoting cell cycle exit. Modulates GMNN activity by reducing its affinity for CDT1. This chain is Multicilin (Mcidas), found in Rattus norvegicus (Rat).